Consider the following 325-residue polypeptide: Endo-1,4-beta-xylanase 2 (325 aa).

The first 18 residues, 1–18 (MLYTSIFAAAMAASGAMA), serve as a signal peptide directing secretion. Residues 26 to 325 (ASNCTTLDSF…KAAVKAIMAI (300 aa)) enclose the GH10 domain. N-linked (GlcNAc...) asparagine glycosylation is present at Asn28. Catalysis depends on Glu157, which acts as the Proton donor. Glu262 acts as the Nucleophile in catalysis. A disulfide bridge links Cys280 with Cys286.

Belongs to the glycosyl hydrolase 10 (cellulase F) family.

Its subcellular location is the secreted. It carries out the reaction Endohydrolysis of (1-&gt;4)-beta-D-xylosidic linkages in xylans.. Its pathway is glycan degradation; xylan degradation. Functionally, endo-1,4-beta-xylanase involved in the hydrolysis of xylan, a major structural heterogeneous polysaccharide found in plant biomass representing the second most abundant polysaccharide in the biosphere, after cellulose. This Claviceps purpurea (Ergot fungus) protein is Endo-1,4-beta-xylanase 2 (xyl2).